Consider the following 94-residue polypeptide: Large ribosomal subunit protein bL27 (94 aa).

Residues 1–9 (MLKLNLQFF) constitute a propeptide that is removed on maturation.

This sequence belongs to the bacterial ribosomal protein bL27 family. In terms of processing, the N-terminus is cleaved by ribosomal processing cysteine protease Prp.

The sequence is that of Large ribosomal subunit protein bL27 from Staphylococcus epidermidis (strain ATCC 35984 / DSM 28319 / BCRC 17069 / CCUG 31568 / BM 3577 / RP62A).